The sequence spans 321 residues: Urease accessory protein UreD (321 aa).

This sequence belongs to the UreD family. UreD, UreF and UreG form a complex that acts as a GTP-hydrolysis-dependent molecular chaperone, activating the urease apoprotein by helping to assemble the nickel containing metallocenter of UreC. The UreE protein probably delivers the nickel.

The protein resides in the cytoplasm. Functionally, required for maturation of urease via the functional incorporation of the urease nickel metallocenter. This is Urease accessory protein UreD from Photorhabdus laumondii subsp. laumondii (strain DSM 15139 / CIP 105565 / TT01) (Photorhabdus luminescens subsp. laumondii).